A 319-amino-acid chain; its full sequence is Solute carrier family 25 member 34 (319 aa).

The segment at methionine 1–leucine 22 is disordered. The span at serine 10 to leucine 22 shows a compositional bias: pro residues. Solcar repeat units follow at residues leucine 22 to alanine 115, aspartate 119 to tryptophan 212, and leucine 222 to arginine 313. A run of 6 helical transmembrane segments spans residues proline 25–leucine 45, serine 63–glycine 83, glycine 116–isoleucine 138, valine 188–alanine 209, serine 224–proline 244, and leucine 296–histidine 319.

This sequence belongs to the mitochondrial carrier (TC 2.A.29) family.

The protein resides in the mitochondrion inner membrane. The sequence is that of Solute carrier family 25 member 34 (slc25a34) from Danio rerio (Zebrafish).